The sequence spans 55 residues: Large ribosomal subunit protein bL33 (55 aa).

It belongs to the bacterial ribosomal protein bL33 family.

The protein is Large ribosomal subunit protein bL33 of Cereibacter sphaeroides (strain ATCC 17029 / ATH 2.4.9) (Rhodobacter sphaeroides).